A 525-amino-acid polypeptide reads, in one-letter code: Adenosine deaminase AGSA (525 aa).

Positions 1–25 (MSSFSTHNFVAIATFVCWFCCLATA) are cleaved as a signal peptide. The N-linked (GlcNAc...) asparagine glycan is linked to Asn81. Residues His117 and His119 each contribute to the Zn(2+) site. Asp120 lines the substrate pocket. The N-linked (GlcNAc...) asparagine glycan is linked to Asn132. Cys142 and Cys163 form a disulfide bridge. Asn188 carries N-linked (GlcNAc...) asparagine glycosylation. Substrate contacts are provided by residues 207 to 214 (WVRFNKYF) and Gly329. N-linked (GlcNAc...) asparagine glycosylation is present at Asn334. His361 provides a ligand contact to Zn(2+). Glu364 serves as the catalytic Proton donor. Catalysis depends on His389, which acts as the Proton acceptor. A Zn(2+)-binding site is contributed by Asp446. Asp447 serves as a coordination point for substrate.

The protein belongs to the metallo-dependent hydrolases superfamily. Adenosine and AMP deaminases family. ADGF subfamily. Zn(2+) serves as cofactor. In terms of tissue distribution, detected in egg cordons and in the developing central nervous system. Not detected in adult central nervous system (at protein level). Atrial gland.

The protein resides in the secreted. The catalysed reaction is adenosine + H2O + H(+) = inosine + NH4(+). In terms of biological role, adenosine deaminase that may contribute to the degradation of extracellular adenosine, a signaling molecule that controls a variety of cellular responses. May play a role in the regulation of cell proliferation. This is Adenosine deaminase AGSA from Aplysia californica (California sea hare).